Reading from the N-terminus, the 163-residue chain is F-box protein At2g35280 (163 aa).

In terms of domain architecture, F-box spans 8 to 57 (ISRLEALPQDLLREIVAKIGVKSAEDYHNCILSCKELGASANDERVLKTL).

The polypeptide is F-box protein At2g35280 (Arabidopsis thaliana (Mouse-ear cress)).